The chain runs to 472 residues: UDP-glucuronosyltransferase (472 aa).

Asparagine 59, asparagine 227, and asparagine 377 each carry an N-linked (GlcNAc...) asparagine glycan. A helical transmembrane segment spans residues 436–456; that stretch reads FGFILLILLTVLWVTLKCCLF.

Belongs to the UDP-glycosyltransferase family.

The protein localises to the microsome membrane. It localises to the endoplasmic reticulum membrane. It carries out the reaction glucuronate acceptor + UDP-alpha-D-glucuronate = acceptor beta-D-glucuronoside + UDP + H(+). Functionally, UDPGT is of major importance in the conjugation and subsequent elimination of potentially toxic xenobiotics and endogenous compounds. In Pleuronectes platessa (European plaice), this protein is UDP-glucuronosyltransferase (ugt3).